The following is a 318-amino-acid chain: Protein-methionine-sulfoxide reductase catalytic subunit MsrP (318 aa).

Residues 1-40 (MKQLMMSDVTPEEIFNQRRQIIKSMGLGIATLGLPNIAFA) constitute a signal peptide (tat-type signal). Mo-molybdopterin is bound by residues asparagine 72, 75–76 (YE), cysteine 130, threonine 165, asparagine 217, arginine 222, and 233–235 (SIK).

Belongs to the MsrP family. In terms of assembly, heterodimer of a catalytic subunit (MsrP) and a heme-binding subunit (MsrQ). The cofactor is Mo-molybdopterin. Post-translationally, predicted to be exported by the Tat system. The position of the signal peptide cleavage has not been experimentally proven.

It is found in the periplasm. The catalysed reaction is L-methionyl-[protein] + a quinone + H2O = L-methionyl-(S)-S-oxide-[protein] + a quinol. It carries out the reaction L-methionyl-[protein] + a quinone + H2O = L-methionyl-(R)-S-oxide-[protein] + a quinol. In terms of biological role, part of the MsrPQ system that repairs oxidized periplasmic proteins containing methionine sulfoxide residues (Met-O), using respiratory chain electrons. Thus protects these proteins from oxidative-stress damage caused by reactive species of oxygen and chlorine generated by the host defense mechanisms. MsrPQ is essential for the maintenance of envelope integrity under bleach stress, rescuing a wide series of structurally unrelated periplasmic proteins from methionine oxidation. The catalytic subunit MsrP is non-stereospecific, being able to reduce both (R-) and (S-) diastereoisomers of methionine sulfoxide. The chain is Protein-methionine-sulfoxide reductase catalytic subunit MsrP from Haemophilus ducreyi (strain 35000HP / ATCC 700724).